We begin with the raw amino-acid sequence, 159 residues long: Cyclic pyranopterin monophosphate synthase (159 aa).

Substrate is bound by residues 74-76 (MCH) and 112-113 (ME). Residue Asp127 is part of the active site.

It belongs to the MoaC family. As to quaternary structure, homohexamer; trimer of dimers.

It catalyses the reaction (8S)-3',8-cyclo-7,8-dihydroguanosine 5'-triphosphate = cyclic pyranopterin phosphate + diphosphate. The protein operates within cofactor biosynthesis; molybdopterin biosynthesis. Catalyzes the conversion of (8S)-3',8-cyclo-7,8-dihydroguanosine 5'-triphosphate to cyclic pyranopterin monophosphate (cPMP). This is Cyclic pyranopterin monophosphate synthase from Helicobacter hepaticus (strain ATCC 51449 / 3B1).